Consider the following 364-residue polypeptide: Fructose-bisphosphate aldolase B (364 aa).

The residue at position 2 (Ala-2) is an N-acetylalanine. Lys-13 is modified (N6-succinyllysine). At Ser-36 the chain carries Phosphoserine. The residue at position 39 (Thr-39) is a Phosphothreonine. A beta-D-fructose 1,6-bisphosphate-binding site is contributed by Arg-43. The residue at position 119 (Thr-119) is a Phosphothreonine. Residue Lys-121 is modified to N6-succinyllysine. Ser-132 carries the phosphoserine modification. Glu-188 (proton acceptor) is an active-site residue. Residue Lys-230 is the Schiff-base intermediate with dihydroxyacetone-P of the active site. Ser-272, Ser-276, Ser-299, and Ser-301 each carry phosphoserine. Residue 272–274 participates in beta-D-fructose 1,6-bisphosphate binding; the sequence is SGG. Arg-304 lines the beta-D-fructose 1,6-bisphosphate pocket. A Phosphoserine modification is found at Ser-309. Lys-317 bears the N6-succinyllysine mark.

It belongs to the class I fructose-bisphosphate aldolase family. As to quaternary structure, homotetramer. Interacts with BBS1, BBS2, BBS4 and BBS7. Forms a ternary complex with G6PD and TP53; this interaction is direct.

The protein resides in the cytoplasm. It is found in the cytosol. The protein localises to the cytoskeleton. Its subcellular location is the microtubule organizing center. It localises to the centrosome. The protein resides in the centriolar satellite. It catalyses the reaction beta-D-fructose 1,6-bisphosphate = D-glyceraldehyde 3-phosphate + dihydroxyacetone phosphate. The catalysed reaction is beta-D-fructose 1-phosphate = D-glyceraldehyde + dihydroxyacetone phosphate. Its pathway is carbohydrate degradation; glycolysis; D-glyceraldehyde 3-phosphate and glycerone phosphate from D-glucose: step 4/4. The protein operates within carbohydrate biosynthesis; gluconeogenesis. It functions in the pathway carbohydrate metabolism; fructose metabolism. Functionally, catalyzes the aldol cleavage of fructose 1,6-biphosphate to form two triosephosphates dihydroxyacetone phosphate and D-glyceraldehyde 3-phosphate in glycolysis as well as the reverse stereospecific aldol addition reaction in gluconeogenesis. In fructolysis, metabolizes fructose 1-phosphate derived from the phosphorylation of dietary fructose by fructokinase into dihydroxyacetone phosphate and D-glyceraldehyde. Acts as an adapter independently of its enzymatic activity, exerts a tumor suppressor role by stabilizing the ternary complex with G6PD and TP53 to inhibit G6PD activity and keep oxidative pentose phosphate metabolism in check. The sequence is that of Fructose-bisphosphate aldolase B (ALDOB) from Ovis aries (Sheep).